A 540-amino-acid chain; its full sequence is Malolactic enzyme (540 aa).

The active-site Proton donor is Y90. K163 acts as the Proton acceptor in catalysis. K163 is a substrate binding site. Residues E234, D235, and D258 each coordinate Mn(2+). NAD(+) contacts are provided by residues 291-294 (GGSA), N403, and N448. A substrate-binding site is contributed by N448.

The protein belongs to the malic enzymes family. Homodimer. Requires Mn(2+) as cofactor. NAD(+) serves as cofactor.

The enzyme catalyses (S)-malate + H(+) = (S)-lactate + CO2. In terms of biological role, involved in the malolactic fermentation (MLF) of wine, which results in a natural decrease in acidity and favorable changes in wine flavors. Catalyzes the decarboxylation of L-malate to L-lactate. The polypeptide is Malolactic enzyme (Lactococcus lactis subsp. lactis (strain IL1403) (Streptococcus lactis)).